Consider the following 527-residue polypeptide: Thymidine kinase (527 aa).

A disordered region spans residues 1 to 57; sequence MTGRGQPPKKNDTYDYPRKQPPKNGSYDNYDYPTSTKTRSTNKQRKDSNYPPRETIF. The segment covering 9-18 has biased composition (basic and acidic residues); sequence KKNDTYDYPR. The segment covering 32–41 has biased composition (polar residues); that stretch reads YPTSTKTRST. Position 216-223 (216-223) interacts with ATP; it reads GSIGVGKT. Catalysis depends on Glu243, which acts as the Proton acceptor. Positions 260 and 281 each coordinate substrate. Position 368 (Arg368) interacts with ATP. A substrate-binding site is contributed by Arg374.

It belongs to the herpesviridae thymidine kinase family. Homodimer.

It carries out the reaction thymidine + ATP = dTMP + ADP + H(+). Its function is as follows. Catalyzes the transfer of the gamma-phospho group of ATP to thymidine to generate dTMP in the salvage pathway of pyrimidine synthesis. The dTMP serves as a substrate for DNA polymerase during viral DNA replication. Allows the virus to be reactivated and to grow in non-proliferative cells lacking a high concentration of phosphorylated nucleic acid precursors. This is Thymidine kinase from Saimiriine herpesvirus 2 (strain 11) (SaHV-2).